The primary structure comprises 1095 residues: DNA-directed RNA polymerase subunit beta'' (1095 aa).

The Zn(2+) site is built by cysteine 220, cysteine 293, cysteine 300, and cysteine 303.

The protein belongs to the RNA polymerase beta' chain family. RpoC2 subfamily. In terms of assembly, in plastids the minimal PEP RNA polymerase catalytic core is composed of four subunits: alpha, beta, beta', and beta''. When a (nuclear-encoded) sigma factor is associated with the core the holoenzyme is formed, which can initiate transcription. Zn(2+) serves as cofactor.

It localises to the plastid. The protein localises to the chloroplast. The catalysed reaction is RNA(n) + a ribonucleoside 5'-triphosphate = RNA(n+1) + diphosphate. DNA-dependent RNA polymerase catalyzes the transcription of DNA into RNA using the four ribonucleoside triphosphates as substrates. This chain is DNA-directed RNA polymerase subunit beta'', found in Zygnema circumcarinatum (Green alga).